A 446-amino-acid chain; its full sequence is Phosphoglucosamine mutase (446 aa).

The active-site Phosphoserine intermediate is the serine 103. Positions 103, 242, 244, and 246 each coordinate Mg(2+). A Phosphoserine modification is found at serine 103.

The protein belongs to the phosphohexose mutase family. The cofactor is Mg(2+). Activated by phosphorylation.

It catalyses the reaction alpha-D-glucosamine 1-phosphate = D-glucosamine 6-phosphate. In terms of biological role, catalyzes the conversion of glucosamine-6-phosphate to glucosamine-1-phosphate. The chain is Phosphoglucosamine mutase from Vibrio vulnificus (strain YJ016).